A 308-amino-acid polypeptide reads, in one-letter code: Transaldolase (308 aa).

The active-site Schiff-base intermediate with substrate is the K125.

This sequence belongs to the transaldolase family. Type 1 subfamily. Homodimer.

It is found in the cytoplasm. It carries out the reaction D-sedoheptulose 7-phosphate + D-glyceraldehyde 3-phosphate = D-erythrose 4-phosphate + beta-D-fructose 6-phosphate. It participates in carbohydrate degradation; pentose phosphate pathway; D-glyceraldehyde 3-phosphate and beta-D-fructose 6-phosphate from D-ribose 5-phosphate and D-xylulose 5-phosphate (non-oxidative stage): step 2/3. In terms of biological role, transaldolase is important for the balance of metabolites in the pentose-phosphate pathway. The polypeptide is Transaldolase (Pseudomonas putida (strain ATCC 47054 / DSM 6125 / CFBP 8728 / NCIMB 11950 / KT2440)).